The primary structure comprises 84 residues: Small ribosomal subunit protein uS17 (84 aa).

It belongs to the universal ribosomal protein uS17 family. Part of the 30S ribosomal subunit.

One of the primary rRNA binding proteins, it binds specifically to the 5'-end of 16S ribosomal RNA. This is Small ribosomal subunit protein uS17 from Clostridium kluyveri (strain NBRC 12016).